We begin with the raw amino-acid sequence, 350 residues long: Magnesium-chelatase 38 kDa subunit (350 aa).

52–59 (GDRGTGKS) provides a ligand contact to ATP.

This sequence belongs to the Mg-chelatase subunits D/I family.

It catalyses the reaction protoporphyrin IX + Mg(2+) + ATP + H2O = Mg-protoporphyrin IX + ADP + phosphate + 3 H(+). The protein operates within porphyrin-containing compound metabolism; bacteriochlorophyll biosynthesis. Involved in bacteriochlorophyll biosynthesis; introduces a magnesium ion into protoporphyrin IX to yield Mg-protoporphyrin IX. The protein is Magnesium-chelatase 38 kDa subunit (bchI) of Rhodobacter capsulatus (strain ATCC BAA-309 / NBRC 16581 / SB1003).